The following is a 456-amino-acid chain: UDP-N-acetylmuramoylalanine--D-glutamate ligase (456 aa).

Position 119–125 (119–125 (GTNGKTT)) interacts with ATP.

The protein belongs to the MurCDEF family.

The protein resides in the cytoplasm. The enzyme catalyses UDP-N-acetyl-alpha-D-muramoyl-L-alanine + D-glutamate + ATP = UDP-N-acetyl-alpha-D-muramoyl-L-alanyl-D-glutamate + ADP + phosphate + H(+). The protein operates within cell wall biogenesis; peptidoglycan biosynthesis. Cell wall formation. Catalyzes the addition of glutamate to the nucleotide precursor UDP-N-acetylmuramoyl-L-alanine (UMA). This is UDP-N-acetylmuramoylalanine--D-glutamate ligase (murD) from Enterococcus faecalis (strain ATCC 700802 / V583).